The sequence spans 316 residues: L-lactate dehydrogenase (316 aa).

NAD(+) contacts are provided by residues V15, D37, K42, Y68, and G82 to L83. Substrate is bound by residues Q85, R91, and N123–D126. NAD(+) is bound by residues A121–N123 and T146. Position 151-154 (D151–R154) interacts with substrate. Beta-D-fructose 1,6-bisphosphate-binding residues include R156 and H171. Residue H178 is the Proton acceptor of the active site. Y222 carries the phosphotyrosine modification. T231 is a substrate binding site.

The protein belongs to the LDH/MDH superfamily. LDH family. As to quaternary structure, homotetramer.

Its subcellular location is the cytoplasm. It catalyses the reaction (S)-lactate + NAD(+) = pyruvate + NADH + H(+). It functions in the pathway fermentation; pyruvate fermentation to lactate; (S)-lactate from pyruvate: step 1/1. With respect to regulation, allosterically activated by fructose 1,6-bisphosphate (FBP). Catalyzes the conversion of lactate to pyruvate. This is L-lactate dehydrogenase from Borrelia hermsii (strain HS1 / DAH).